The following is a 65-amino-acid chain: Translational regulator CsrA (65 aa).

It belongs to the CsrA/RsmA family. In terms of assembly, homodimer; the beta-strands of each monomer intercalate to form a hydrophobic core, while the alpha-helices form wings that extend away from the core.

Its subcellular location is the cytoplasm. A key translational regulator that binds mRNA to regulate translation initiation and/or mRNA stability. Mediates global changes in gene expression, shifting from rapid growth to stress survival by linking envelope stress, the stringent response and the catabolite repression systems. Usually binds in the 5'-UTR; binding at or near the Shine-Dalgarno sequence prevents ribosome-binding, repressing translation, binding elsewhere in the 5'-UTR can activate translation and/or stabilize the mRNA. Its function is antagonized by small RNA(s). This chain is Translational regulator CsrA, found in Pseudomonas putida (strain ATCC 47054 / DSM 6125 / CFBP 8728 / NCIMB 11950 / KT2440).